The following is a 485-amino-acid chain: Subtilisin-like protease 1 (485 aa).

The N-terminal stretch at 1–19 (MGIFRFISISLAAVSAANA) is a signal peptide. A propeptide spanning residues 20 to 116 (GHILSMGHAK…VEPDTTITIH (97 aa)) is cleaved from the precursor. An Inhibitor I9 domain is found at 34-116 (SYIVVMKDGT…VEPDTTITIH (83 aa)). The Peptidase S8 domain maps to 126–400 (SWGLARISSQ…NILINNGDAK (275 aa)). Residues D158 and H190 each act as charge relay system in the active site. The N-linked (GlcNAc...) asparagine glycan is linked to N251. Catalysis depends on S345, which acts as the Charge relay system. Residues 377–394 (GTSSVTNPGPGTRTNILI) show a composition bias toward polar residues. The tract at residues 377 to 462 (GTSSVTNPGP…HTPFPNDDFN (86 aa)) is disordered. Over residues 409–418 (PSQPPKPSQP) the composition is skewed to pro residues. A compositionally biased stretch (low complexity) spans 419 to 428 (SKPQQPSEPQ). Residues 433 to 455 (PQEPAPGQPAPAPAPVPQHPHTP) show a composition bias toward pro residues.

The protein belongs to the peptidase S8 family.

Its subcellular location is the secreted. Its function is as follows. Secreted subtilisin-like serine protease with keratinolytic activity that contributes to pathogenicity. The polypeptide is Subtilisin-like protease 1 (SUB1) (Arthroderma otae (Microsporum canis)).